Here is a 114-residue protein sequence, read N- to C-terminus: Ribonuclease P protein component (114 aa).

The protein belongs to the RnpA family. As to quaternary structure, consists of a catalytic RNA component (M1 or rnpB) and a protein subunit.

It carries out the reaction Endonucleolytic cleavage of RNA, removing 5'-extranucleotides from tRNA precursor.. Its function is as follows. RNaseP catalyzes the removal of the 5'-leader sequence from pre-tRNA to produce the mature 5'-terminus. It can also cleave other RNA substrates such as 4.5S RNA. The protein component plays an auxiliary but essential role in vivo by binding to the 5'-leader sequence and broadening the substrate specificity of the ribozyme. This chain is Ribonuclease P protein component, found in Alkaliphilus oremlandii (strain OhILAs) (Clostridium oremlandii (strain OhILAs)).